We begin with the raw amino-acid sequence, 201 residues long: Small ribosomal subunit protein uS4c (201 aa).

The 61-residue stretch at 89–149 (MRLDNILFRL…DKPKSGALIK (61 aa)) folds into the S4 RNA-binding domain.

It belongs to the universal ribosomal protein uS4 family. In terms of assembly, part of the 30S ribosomal subunit. Contacts protein S5. The interaction surface between S4 and S5 is involved in control of translational fidelity.

The protein localises to the plastid. Functionally, one of the primary rRNA binding proteins, it binds directly to 16S rRNA where it nucleates assembly of the body of the 30S subunit. In terms of biological role, with S5 and S12 plays an important role in translational accuracy. In Cuscuta reflexa (Southern Asian dodder), this protein is Small ribosomal subunit protein uS4c (rps4).